The sequence spans 784 residues: Ubiquitin carboxyl-terminal hydrolase 1 (784 aa).

Disordered stretches follow at residues 1–21 (MPGVIPSESNGLSRGSPSKKN) and 33–54 (TKRALDFTDSQEDEEKASEYRG). Positions 7–16 (SESNGLSRGS) are enriched in polar residues. Phosphoserine is present on residues S16, S42, and S67. The region spanning 81–784 (VGLNNLGNTC…TPYLLFYKKL (704 aa)) is the USP domain. Residue C90 is the Nucleophile of the active site. 2 stretches are compositionally biased toward basic and acidic residues: residues 232-243 (KVEEKSLQKEET) and 252-264 (DSTRNLDDLKEQL). Disordered regions lie at residues 232 to 341 (KVEE…KINW) and 363 to 411 (TNQR…SSEA). Polar residues predominate over residues 389-407 (NTVNGSGPASPGSSVTPVD). At S475 the chain carries Phosphoserine. H593 acts as the Proton acceptor in catalysis. Positions 686–723 (PEKVVGTPFTDSRNSETNDTNGTQESDRSKESSDQTGI) are disordered. The span at 694–709 (FTDSRNSETNDTNGTQ) shows a compositional bias: polar residues. Residue S767 is modified to Phosphoserine.

The protein belongs to the peptidase C19 family. As to quaternary structure, interacts with FANCD2 and PCNA. Interacts with WDR48. Interacts with ATAD5; the interaction regulates USP1-mediated PCNA deubiquitination. In terms of processing, autocatalytic cleavage of USP1 following UV irradiation inactivates it, leading to an increase in ubiquitinated PCNA, recruitment of POLH and translesion synthesis. Post-translationally, ubiquitinated by the CRL2(KLHDC2) complex following autocatalytic cleavage, leading to its degradation: the CRL2(KLHDC2) complex recognizes the diglycine (Gly-Gly) at the C-terminus.

It localises to the nucleus. The catalysed reaction is Thiol-dependent hydrolysis of ester, thioester, amide, peptide and isopeptide bonds formed by the C-terminal Gly of ubiquitin (a 76-residue protein attached to proteins as an intracellular targeting signal).. In terms of biological role, negative regulator of DNA damage repair which specifically deubiquitinates monoubiquitinated FANCD2. Also involved in PCNA-mediated translesion synthesis (TLS) by deubiquitinating monoubiquitinated PCNA. Has almost no deubiquitinating activity by itself and requires the interaction with WDR48 to have a high activity. This is Ubiquitin carboxyl-terminal hydrolase 1 from Rattus norvegicus (Rat).